The chain runs to 882 residues: Bifunctional heparan sulfate N-deacetylase/N-sulfotransferase 1 (882 aa).

At 1–17 the chain is on the cytoplasmic side; that stretch reads MPALACLRRLCRHLSPQ. The sufficient for localization to Golgi membrane stretch occupies residues 1-169; the sequence is MPALACLRRL…VAYGVGIIGF (169 aa). A helical; Signal-anchor for type II membrane protein transmembrane segment spans residues 18 to 38; that stretch reads AVLFLLFVFCLFSVFVSAYYL. Residues 39 to 882 lie on the Lumenal side of the membrane; sequence YGWNRGLEPS…WLREDLQNTR (844 aa). A heparan sulfate N-deacetylase 1 region spans residues 40 to 598; sequence GWNRGLEPSA…KRHKDIWSKE (559 aa). N-linked (GlcNAc...) asparagine glycans are attached at residues Asn-231, Asn-351, and Asn-401. A heparan sulfate N-sulfotransferase 1 region spans residues 599–882; it reads KTCDRFPKLL…WLREDLQNTR (284 aa). Lys-614 functions as the For sulfotransferase activity in the catalytic mechanism. 614-618 lines the adenosine 3',5'-bisphosphate pocket; that stretch reads KTGTT. Asn-667 is a glycosylation site (N-linked (GlcNAc...) asparagine). Residues Ser-712 and Trp-817 each contribute to the adenosine 3',5'-bisphosphate site. Cys-818 and Cys-828 are oxidised to a cystine. 833–837 is an adenosine 3',5'-bisphosphate binding site; that stretch reads KGRKY.

Belongs to the sulfotransferase 1 family. NDST subfamily. In terms of assembly, monomer. Interacts with heparan sulfate co-polymerase subunits EXT1 and EXT2. Widely expressed in adult and throughout development.

The protein resides in the golgi apparatus membrane. Its subcellular location is the golgi apparatus. It is found in the trans-Golgi network membrane. The protein localises to the cis-Golgi network membrane. The catalysed reaction is N-acetyl-alpha-D-glucosaminyl-[heparan sulfate](n) + H2O = alpha-D-glucosaminyl-[heparan sulfate](n) + acetate. It carries out the reaction alpha-D-glucosaminyl-[heparan sulfate](n) + 3'-phosphoadenylyl sulfate = N-sulfo-alpha-D-glucosaminyl-[heparan sulfate](n) + adenosine 3',5'-bisphosphate + 2 H(+). It functions in the pathway glycan metabolism; heparan sulfate biosynthesis. The protein operates within glycan metabolism; heparin biosynthesis. Its activity is regulated as follows. Inhibited by long N-sulfated sequences (more than 6 sugar residues) accumulating in its substrates heparan sulfate, and heparin. Essential bifunctional enzyme that catalyzes both the N-deacetylation and the N-sulfation of glucosamine (GlcNAc) of the glycosaminoglycan in heparan sulfate. Modifies the GlcNAc-GlcA disaccharide repeating sugar backbone to make N-sulfated heparosan, a prerequisite substrate for later modifications in heparin biosynthesis. Plays a role in determining the extent and pattern of sulfation of heparan sulfate. Participates in biosynthesis of heparan sulfate that can ultimately serve as L-selectin ligands, thereby playing a role in inflammatory response. Required for the exosomal release of SDCBP, CD63 and syndecan. In Mus musculus (Mouse), this protein is Bifunctional heparan sulfate N-deacetylase/N-sulfotransferase 1.